A 304-amino-acid polypeptide reads, in one-letter code: Glycine--tRNA ligase alpha subunit (304 aa).

This sequence belongs to the class-II aminoacyl-tRNA synthetase family. Tetramer of two alpha and two beta subunits.

Its subcellular location is the cytoplasm. The catalysed reaction is tRNA(Gly) + glycine + ATP = glycyl-tRNA(Gly) + AMP + diphosphate. The chain is Glycine--tRNA ligase alpha subunit from Pectobacterium carotovorum subsp. carotovorum (strain PC1).